The chain runs to 347 residues: Tsukushi (347 aa).

The signal sequence occupies residues 1–19 (MASLLCLFFSLLGLAAIGA). Residues 20-61 (VKNCHPQCRCEVETFGLFDSFSLTKVDCSRIGPGNTPVPIPL) form the LRRNT domain. 10 LRR repeats span residues 62–83 (DTSH…MLSG), 88–109 (TLVS…AFSK), 112–133 (YLET…CFTG), 135–156 (PLVE…LFTT), 160–175 (DLPI…LTSI), 185–205 (YIKS…LNGI), 206–227 (PLQY…AFDS), 230–252 (ELVH…AFRS), 255–277 (NLQA…VFSG), and 280–301 (SLQE…VFMQ). N-linked (GlcNAc...) asparagine glycosylation is present at asparagine 285.

In terms of assembly, forms a ternary complex with chordin/CHRD and BMP4.

It is found in the secreted. Contributes to various developmental events through its interactions with multiple signaling pathways. Dorsalizing factor which functions as an inhibitor of bone morphogenetic proteins during gastrulation. This is Tsukushi (tsku) from Danio rerio (Zebrafish).